Consider the following 96-residue polypeptide: Aspartyl/glutamyl-tRNA(Asn/Gln) amidotransferase subunit C (96 aa).

It belongs to the GatC family. In terms of assembly, heterotrimer of A, B and C subunits.

It carries out the reaction L-glutamyl-tRNA(Gln) + L-glutamine + ATP + H2O = L-glutaminyl-tRNA(Gln) + L-glutamate + ADP + phosphate + H(+). The enzyme catalyses L-aspartyl-tRNA(Asn) + L-glutamine + ATP + H2O = L-asparaginyl-tRNA(Asn) + L-glutamate + ADP + phosphate + 2 H(+). In terms of biological role, allows the formation of correctly charged Asn-tRNA(Asn) or Gln-tRNA(Gln) through the transamidation of misacylated Asp-tRNA(Asn) or Glu-tRNA(Gln) in organisms which lack either or both of asparaginyl-tRNA or glutaminyl-tRNA synthetases. The reaction takes place in the presence of glutamine and ATP through an activated phospho-Asp-tRNA(Asn) or phospho-Glu-tRNA(Gln). The chain is Aspartyl/glutamyl-tRNA(Asn/Gln) amidotransferase subunit C from Wolinella succinogenes (strain ATCC 29543 / DSM 1740 / CCUG 13145 / JCM 31913 / LMG 7466 / NCTC 11488 / FDC 602W) (Vibrio succinogenes).